A 224-amino-acid chain; its full sequence is MPVRASIEPLTWENAFFGVNSAIVRITSEAPLLTPDALAPWSRVQAKIAASNTGELDALQQLGFSLVEGEVDLALPVNNVSDSGAVVAQETDIPALRQLASAAFAQSRFRAPWYAPDASGRFYAQWIENAVRGTFDHQCLILRAASGDIRGYVSLRELNATDARIGLLAGRGAGAELMQTALNWAYARGKTTLRVATQMGNTAALKRYIQSGANVESTAYWLYR.

One can recognise an N-acetyltransferase domain in the interval 94–224 (PALRQLASAA…VESTAYWLYR (131 aa)). Acetyl-CoA contacts are provided by residues 168–174 (LAGRGAG), N201, and R207. Residue Y208 is the Proton donor of the active site.

Belongs to the WecD family. As to quaternary structure, homodimer.

The catalysed reaction is dTDP-4-amino-4,6-dideoxy-alpha-D-galactose + acetyl-CoA = dTDP-4-acetamido-4,6-dideoxy-alpha-D-galactose + CoA + H(+). Its pathway is bacterial outer membrane biogenesis; enterobacterial common antigen biosynthesis. In terms of biological role, catalyzes the acetylation of dTDP-fucosamine (dTDP-4-amino-4,6-dideoxy-D-galactose) to dTDP-Fuc4NAc, which is utilized in the biosynthesis of the enterobacterial common antigen (ECA). The chain is dTDP-fucosamine acetyltransferase from Escherichia coli O6:H1 (strain CFT073 / ATCC 700928 / UPEC).